The sequence spans 694 residues: Elongation factor G (694 aa).

The 280-residue stretch at 8 to 287 (EDYRNFGIMA…AVVEFLPAPT (280 aa)) folds into the tr-type G domain. GTP contacts are provided by residues 17–24 (AHIDAGKT), 86–90 (DTPGH), and 140–143 (NKMD).

The protein belongs to the TRAFAC class translation factor GTPase superfamily. Classic translation factor GTPase family. EF-G/EF-2 subfamily.

It localises to the cytoplasm. Functionally, catalyzes the GTP-dependent ribosomal translocation step during translation elongation. During this step, the ribosome changes from the pre-translocational (PRE) to the post-translocational (POST) state as the newly formed A-site-bound peptidyl-tRNA and P-site-bound deacylated tRNA move to the P and E sites, respectively. Catalyzes the coordinated movement of the two tRNA molecules, the mRNA and conformational changes in the ribosome. This is Elongation factor G from Brucella ovis (strain ATCC 25840 / 63/290 / NCTC 10512).